Here is a 498-residue protein sequence, read N- to C-terminus: Cytochrome P450 71D15 (498 aa).

Residues 3–23 (LLQLWSALIILVVTYTISLLI) form a helical; Signal-anchor for type II membrane protein membrane-spanning segment. Cys-437 serves as a coordination point for heme.

Belongs to the cytochrome P450 family. Heme is required as a cofactor.

The protein resides in the endoplasmic reticulum membrane. The enzyme catalyses (4S)-limonene + reduced [NADPH--hemoprotein reductase] + O2 = (1S,6R)-isopiperitenol + oxidized [NADPH--hemoprotein reductase] + H2O + H(+). In terms of biological role, hydroxylates (-)-(4S)-limonene to (-)-trans-isopiperitenol, a precursor of (-)-menthol, responsible for the cooling sensation of peppermint. Fluorinated substrate analogs are hydroxylated with the same regio- and stereochemistry. The sequence is that of Cytochrome P450 71D15 (CYP71D15) from Mentha piperita (Peppermint).